Here is a 678-residue protein sequence, read N- to C-terminus: Putative pentatricopeptide repeat-containing protein At3g18840 (678 aa).

16 PPR repeats span residues 22–56 (TAVSSNQLVNLYSKSGLLREARNVFDEMLERNVYS), 57–84 (WNAVIAAYVKFNNVKEARELFESDNCER), 85–116 (DLITYNTLLSGFAKTDGCESEAIEMFGEMHRK), 124–158 (DDFTVTTMVKLSAKLTNVFYGEQLHGVLVKTGNDG), 159–190 (TKFAVSSLIHMYSKCGKFKEVCNIFNGSCVEF), 192–222 (DSVARNAMIAAYCREGDIDKALSVFWRNPEL), 224–258 (DTISWNTLIAGYAQNGYEEEALKMAVSMEENGLKW), 259–293 (DEHSFGAVLNVLSSLKSLKIGKEVHARVLKNGSYS), 294–324 (NKFVSSGIVDVYCKCGNMKYAESAHLLYGFG), 325–359 (NLYSASSMIVGYSSQGKMVEAKRLFDSLSEKNLVV), 360–390 (WTAMFLGYLNLRQPDSVLELARAFIANETNT), 392–426 (DSLVMVSVLGACSLQAYMEPGKEIHGHSLRTGILM), 427–457 (DKKLVTAFVDMYSKCGNVEYAERIFDSSFER), 458–492 (DTVMYNAMIAGCAHHGHEAKSFQHFEDMTEGGFKP), 493–528 (DEITFMALLSACRHRGLVLEGEKYFKSMIEAYNISP), and 529–563 (ETGHYTCMIDLYGKAYRLDKAIELMEGIDQVEKDA). The interval 565–640 (ILGAFLNACS…FSGCSWANID (76 aa)) is type E motif. The interval 641 to 671 (KQFHMFTSSDISHYETEAIYAMLHFVTKDLS) is type E(+) motif.

The protein belongs to the PPR family. PCMP-E subfamily.

This chain is Putative pentatricopeptide repeat-containing protein At3g18840 (PCMP-E92), found in Arabidopsis thaliana (Mouse-ear cress).